Reading from the N-terminus, the 105-residue chain is uncharacterized protein (105 aa).

This is an uncharacterized protein from Saccharolobus islandicus (Sulfolobus islandicus).